The following is a 357-amino-acid chain: Inner membrane protein YcfT (357 aa).

Residues Met1 to Lys12 lie on the Cytoplasmic side of the membrane. The chain crosses the membrane as a helical span at residues Gly13–Thr33. At Thr34 to Tyr49 the chain is on the periplasmic side. The helical transmembrane segment at Phe50–Ile70 threads the bilayer. Residues Arg71–Arg86 lie on the Cytoplasmic side of the membrane. Residues Ile87–Ala107 form a helical membrane-spanning segment. At Leu108–His135 the chain is on the periplasmic side. The helical transmembrane segment at Gly136–Val156 threads the bilayer. At Cys157–Arg162 the chain is on the cytoplasmic side. Residues Leu163–Thr183 form a helical membrane-spanning segment. The Periplasmic segment spans residues Pro184–Pro196. The helical transmembrane segment at Tyr197 to Leu217 threads the bilayer. The Cytoplasmic segment spans residues Arg218–Ala231. The chain crosses the membrane as a helical span at residues Val232–Met252. The Periplasmic segment spans residues Lys253–Leu310. A helical transmembrane segment spans residues Thr311–Val331. Residues Arg332–Arg357 lie on the Cytoplasmic side of the membrane.

This sequence belongs to the acyltransferase 3 family.

It localises to the cell inner membrane. The sequence is that of Inner membrane protein YcfT (ycfT) from Escherichia coli (strain K12).